The following is a 399-amino-acid chain: Peroxisome assembly protein 12 (399 aa).

Residues Met1–Gly24 form a disordered region. The Peroxisomal matrix portion of the chain corresponds to Met1 to Thr33. Low complexity predominate over residues Ser9 to Gly24. Residues Ile34 to Asn62 form a helical membrane-spanning segment. At Phe63–Tyr67 the chain is on the cytoplasmic side. A helical transmembrane segment spans residues Thr68 to Lys92. Over Thr93–Asn136 the chain is Peroxisomal matrix. Residues Gln137–Asn168 form a helical membrane-spanning segment. The Cytoplasmic segment spans residues Ile169–Ser171. Residues Ser172–Thr208 traverse the membrane as a helical segment. The Peroxisomal matrix segment spans residues Lys209–Gln277. The helical transmembrane segment at Phe278–Val305 threads the bilayer. Residues Asn306–Ile399 are Cytoplasmic-facing. Positions 334, 337, 354, and 357 each coordinate Zn(2+). The segment at Cys334–Asn373 adopts an RING-type; degenerate zinc-finger fold.

Belongs to the pex2/pex10/pex12 family. Component of the PEX2-PEX10-PEX12 retrotranslocation channel, composed of PEX2, PEX10 and PEX12.

The protein resides in the peroxisome membrane. It participates in protein modification; protein ubiquitination. Its function is as follows. Component of a retrotranslocation channel required for peroxisome organization by mediating export of the PEX5 receptor from peroxisomes to the cytosol, thereby promoting PEX5 recycling. The retrotranslocation channel is composed of PEX2, PEX10 and PEX12; each subunit contributing transmembrane segments that coassemble into an open channel that specifically allows the passage of PEX5 through the peroxisomal membrane. PEX12 also regulates PEX5 recycling by activating the E3 ubiquitin-protein ligase activity of PEX10. When PEX5 recycling is compromised, PEX12 stimulates PEX10-mediated polyubiquitination of PEX5, leading to its subsequent degradation. The sequence is that of Peroxisome assembly protein 12 from Saccharomyces cerevisiae (strain ATCC 204508 / S288c) (Baker's yeast).